Here is a 374-residue protein sequence, read N- to C-terminus: Protein-glutamate methylesterase/protein-glutamine glutaminase (374 aa).

One can recognise a Response regulatory domain in the interval K4–M121. D55 is subject to 4-aspartylphosphate. The disordered stretch occupies residues P144 to K186. A compositionally biased stretch (low complexity) spans P154 to P183. One can recognise a CheB-type methylesterase domain in the interval P183–V374. Residues S198, H225, and D318 contribute to the active site.

Belongs to the CheB family. Post-translationally, phosphorylated by CheA. Phosphorylation of the N-terminal regulatory domain activates the methylesterase activity.

Its subcellular location is the cytoplasm. It carries out the reaction [protein]-L-glutamate 5-O-methyl ester + H2O = L-glutamyl-[protein] + methanol + H(+). The catalysed reaction is L-glutaminyl-[protein] + H2O = L-glutamyl-[protein] + NH4(+). Functionally, involved in chemotaxis. Part of a chemotaxis signal transduction system that modulates chemotaxis in response to various stimuli. Catalyzes the demethylation of specific methylglutamate residues introduced into the chemoreceptors (methyl-accepting chemotaxis proteins or MCP) by CheR. Also mediates the irreversible deamidation of specific glutamine residues to glutamic acid. The polypeptide is Protein-glutamate methylesterase/protein-glutamine glutaminase (Pseudomonas putida (Arthrobacter siderocapsulatus)).